The following is a 989-amino-acid chain: ATP-dependent 6-phosphofructokinase subunit alpha (989 aa).

The tract at residues 1–585 (MPEPSISALS…SYESFLSVSK (585 aa)) is N-terminal catalytic PFK domain 1. ATP contacts are provided by residues G220, 283–284 (RS), and 313–316 (GDGS). D314 lines the Mg(2+) pocket. Beta-D-fructose 6-phosphate is bound by residues 359–361 (SID), R396, 403–405 (MGR), E460, R487, and 493–496 (HVQR). D361 serves as the catalytic Proton acceptor. The tract at residues 586–599 (YDDGSYLVPESSRL) is interdomain linker. The interval 600 to 989 (NIAIIHVGAP…LSGRLSIRTT (390 aa)) is C-terminal regulatory PFK domain 2. Residues R670, 727 to 731 (TVSNN), R765, 772 to 774 (QGG), E832, R858, 864 to 867 (HVQQ), and R963 each bind beta-D-fructose 2,6-bisphosphate.

It belongs to the phosphofructokinase type A (PFKA) family. ATP-dependent PFK group I subfamily. Eukaryotic two domain clade 'E' sub-subfamily. Heterododecamer of 4 alpha, 4 beta and 4 gamma chains. The gamma chain bridges the N-terminal halves of the alpha and beta subunits. Mg(2+) serves as cofactor.

It localises to the cytoplasm. The catalysed reaction is beta-D-fructose 6-phosphate + ATP = beta-D-fructose 1,6-bisphosphate + ADP + H(+). It participates in carbohydrate degradation; glycolysis; D-glyceraldehyde 3-phosphate and glycerone phosphate from D-glucose: step 3/4. With respect to regulation, allosterically activated by ADP, AMP, or fructose 2,6-bisphosphate, and allosterically inhibited by ATP or citrate. Functionally, catalyzes the phosphorylation of D-fructose 6-phosphate to fructose 1,6-bisphosphate by ATP, the first committing step of glycolysis. Involved in the modulation of glucose-induced microautophagy of peroxisomes independent of its ability to metabolize glucose intermediates. The chain is ATP-dependent 6-phosphofructokinase subunit alpha (PFK1) from Komagataella phaffii (strain GS115 / ATCC 20864) (Yeast).